The primary structure comprises 526 residues: Delayed-rectifier potassium channel regulatory subunit KCNS1 (526 aa).

Over 1-217 (MLMLLVRGTH…LTMENPGYSL (217 aa)) the chain is Cytoplasmic. A helical transmembrane segment spans residues 218 to 239 (PSKLFSCVSISVVLASIAAMCI). Residues 240–270 (HSLPEYQAREAAAAVAAVAAGRSPEGVRDDP) lie on the Extracellular side of the membrane. A helical transmembrane segment spans residues 271 to 293 (VLRRLEYFCIAWFSFEVSSRLLL). The Cytoplasmic segment spans residues 294–304 (APSTRNFFCHP). Residues 305–322 (LNLIDIVSVLPFYLTLLA) traverse the membrane as a helical segment. Topologically, residues 323 to 337 (GVALGDQGGKEFGHL) are extracellular. Residues 338–358 (GKVVQVFRLMRIFRVLKLARH) form a helical; Voltage-sensor membrane-spanning segment. Over 359-373 (STGLRSLGATLKHSY) the chain is Cytoplasmic. Residues 374 to 395 (REVGILLLYLAVGVSVFSGVAY) traverse the membrane as a helical segment. Residues 396-408 (TAEKEEDVGFNTI) lie on the Extracellular side of the membrane. The helical intramembrane region spans 409 to 420 (PACWWWGTVSMT). Positions 421–426 (TVGYGD) match the Selectivity filter motif. Residues 421–428 (TVGYGDVV) lie within the membrane without spanning it. Topologically, residues 429–435 (PVTVAGK) are extracellular. Residues 436–464 (LAASGCILGGILVVALPITIIFNKFSHFY) traverse the membrane as a helical segment. The Cytoplasmic portion of the chain corresponds to 465–526 (RRQKALEAAV…PSEPPHPQMY (62 aa)). The disordered stretch occupies residues 491 to 526 (GVSEASLETSRETSQEGRSADLESQAPSEPPHPQMY). Over residues 499-511 (TSRETSQEGRSAD) the composition is skewed to basic and acidic residues.

Belongs to the potassium channel family. S (TC 1.A.1.2) subfamily. Kv9.1/KCNS1 sub-subfamily. In terms of assembly, heterotetramer with KCNB1. Heterotetramer with KCNB2. Does not form homomultimers.

The protein localises to the cell membrane. Potassium channel regulatory subunit that modulate the delayed rectifier voltage-gated potassium channel activity of KCNB1 and KCNB2 by altering their kinetics, expression levels, and shifting the half-inactivation potential to more polarized values. While it does not form functional channels on its own, it can form functional heterotetrameric channels with KCNB1 and KCNB2. Each regulatory subunit has unique regulatory properties that can lead to extensive inhibition, significant changes in kinetics, and/or substantial shifts in the voltage dependencies of the inactivation process. This is Delayed-rectifier potassium channel regulatory subunit KCNS1 from Pongo abelii (Sumatran orangutan).